Consider the following 568-residue polypeptide: Potassium-transporting ATPase potassium-binding subunit (568 aa).

A run of 10 helical transmembrane segments spans residues 1–21 (MWLT…LAVP), 60–80 (GLAL…LLRA), 129–149 (AITF…AGFI), 174–194 (VMLP…VPQA), 251–271 (IHIL…GSML), 278–298 (WVLF…VFTA), 381–401 (VGLI…GMMI), 420–440 (VMLA…LAAV), 488–508 (IGLA…ALAG), and 528–548 (PLFM…TFLP).

It belongs to the KdpA family. In terms of assembly, the system is composed of three essential subunits: KdpA, KdpB and KdpC.

The protein resides in the cell inner membrane. Part of the high-affinity ATP-driven potassium transport (or Kdp) system, which catalyzes the hydrolysis of ATP coupled with the electrogenic transport of potassium into the cytoplasm. This subunit binds the periplasmic potassium ions and delivers the ions to the membrane domain of KdpB through an intramembrane tunnel. The chain is Potassium-transporting ATPase potassium-binding subunit from Delftia acidovorans (strain DSM 14801 / SPH-1).